A 66-amino-acid chain; its full sequence is Large ribosomal subunit protein bL35 (66 aa).

Residues 1 to 28 (MPKMKTHRGSAKRFKRTGSGKLKRRHGF) show a composition bias toward basic residues. The disordered stretch occupies residues 1-50 (MPKMKTHRGSAKRFKRTGSGKLKRRHGFTSHMFANKSQKQKRKLRKSAMV).

Belongs to the bacterial ribosomal protein bL35 family.

The polypeptide is Large ribosomal subunit protein bL35 (Listeria monocytogenes serotype 4a (strain HCC23)).